The chain runs to 342 residues: uncharacterized protein (342 aa).

The protein belongs to the cycloisomerase 2 family.

This is an uncharacterized protein from Staphylococcus aureus (strain N315).